Reading from the N-terminus, the 1123-residue chain is Adenylyl cyclase X E (1123 aa).

Residues Met-1 to Tyr-47 lie on the Cytoplasmic side of the membrane. Residues Leu-48 to Ala-68 form a helical membrane-spanning segment. The Extracellular portion of the chain corresponds to Thr-69–Arg-73. The chain crosses the membrane as a helical span at residues Ser-74–Leu-94. The Cytoplasmic portion of the chain corresponds to Ser-95–His-106. Residues Thr-107–Thr-127 traverse the membrane as a helical segment. Residues Glu-128–Ser-137 lie on the Extracellular side of the membrane. A helical transmembrane segment spans residues Trp-138–Ile-158. Residues His-159–Gly-163 are Cytoplasmic-facing. A helical transmembrane segment spans residues Ala-164–Ala-184. Topologically, residues Gln-185 to Ser-196 are extracellular. Residues Val-197–Tyr-217 form a helical membrane-spanning segment. At Arg-218–Lys-581 the chain is on the cytoplasmic side. ATP contacts are provided by residues Leu-346–Asp-348 and Arg-392. Asp-348 is a binding site for Mg(2+). Residues Tyr-582–Thr-602 traverse the membrane as a helical segment. The Extracellular portion of the chain corresponds to Gln-603–Ser-608. A helical transmembrane segment spans residues Cys-609–Tyr-629. Over Lys-630 to Arg-667 the chain is Cytoplasmic. The chain crosses the membrane as a helical span at residues Ile-668 to Ser-688. The Extracellular portion of the chain corresponds to Cys-689 to Thr-719. A helical membrane pass occupies residues Thr-720 to Val-740. The Cytoplasmic segment spans residues Lys-741–Ala-743. Residues Val-744–Phe-764 form a helical membrane-spanning segment. Topologically, residues His-765 to Pro-772 are extracellular. The helical transmembrane segment at Tyr-773 to Val-793 threads the bilayer. At Lys-794 to Leu-1123 the chain is on the cytoplasmic side. ATP is bound by residues Lys-903, Asp-1014 to Trp-1016, Asn-1021 to Arg-1025, and Lys-1061.

This sequence belongs to the adenylyl cyclase class-4/guanylyl cyclase family. Expressed in labella.

Its subcellular location is the membrane. The catalysed reaction is ATP = 3',5'-cyclic AMP + diphosphate. Functionally, catalyzes the formation of the signaling molecule cAMP in response to G-protein signaling. The protein is Adenylyl cyclase X E of Drosophila melanogaster (Fruit fly).